A 361-amino-acid chain; its full sequence is Phosphoserine aminotransferase (361 aa).

Residue Arg42 participates in L-glutamate binding. Residues 76-77 (AR), Trp102, Thr153, Asp173, and Gln196 each bind pyridoxal 5'-phosphate. An N6-(pyridoxal phosphate)lysine modification is found at Lys197. 238–239 (NT) serves as a coordination point for pyridoxal 5'-phosphate.

Belongs to the class-V pyridoxal-phosphate-dependent aminotransferase family. SerC subfamily. In terms of assembly, homodimer. It depends on pyridoxal 5'-phosphate as a cofactor.

It localises to the cytoplasm. It carries out the reaction O-phospho-L-serine + 2-oxoglutarate = 3-phosphooxypyruvate + L-glutamate. The enzyme catalyses 4-(phosphooxy)-L-threonine + 2-oxoglutarate = (R)-3-hydroxy-2-oxo-4-phosphooxybutanoate + L-glutamate. The protein operates within amino-acid biosynthesis; L-serine biosynthesis; L-serine from 3-phospho-D-glycerate: step 2/3. It functions in the pathway cofactor biosynthesis; pyridoxine 5'-phosphate biosynthesis; pyridoxine 5'-phosphate from D-erythrose 4-phosphate: step 3/5. Catalyzes the reversible conversion of 3-phosphohydroxypyruvate to phosphoserine and of 3-hydroxy-2-oxo-4-phosphonooxybutanoate to phosphohydroxythreonine. This is Phosphoserine aminotransferase from Yersinia enterocolitica serotype O:8 / biotype 1B (strain NCTC 13174 / 8081).